We begin with the raw amino-acid sequence, 464 residues long: Glutamate--tRNA ligase (464 aa).

Residues 9–19 (PSPTGYLHIGG) carry the 'HIGH' region motif. The 'KMSKS' region signature appears at 242-246 (KISKR). K245 serves as a coordination point for ATP.

The protein belongs to the class-I aminoacyl-tRNA synthetase family. Glutamate--tRNA ligase type 1 subfamily. As to quaternary structure, monomer.

It is found in the cytoplasm. The catalysed reaction is tRNA(Glu) + L-glutamate + ATP = L-glutamyl-tRNA(Glu) + AMP + diphosphate. Its function is as follows. Catalyzes the attachment of glutamate to tRNA(Glu) in a two-step reaction: glutamate is first activated by ATP to form Glu-AMP and then transferred to the acceptor end of tRNA(Glu). The protein is Glutamate--tRNA ligase of Neisseria gonorrhoeae (strain NCCP11945).